We begin with the raw amino-acid sequence, 197 residues long: dTTP/UTP pyrophosphatase (197 aa).

The active-site Proton acceptor is D70.

It belongs to the Maf family. YhdE subfamily. The cofactor is a divalent metal cation.

It localises to the cytoplasm. It catalyses the reaction dTTP + H2O = dTMP + diphosphate + H(+). The enzyme catalyses UTP + H2O = UMP + diphosphate + H(+). In terms of biological role, nucleoside triphosphate pyrophosphatase that hydrolyzes dTTP and UTP. May have a dual role in cell division arrest and in preventing the incorporation of modified nucleotides into cellular nucleic acids. This chain is dTTP/UTP pyrophosphatase, found in Methanosarcina mazei (strain ATCC BAA-159 / DSM 3647 / Goe1 / Go1 / JCM 11833 / OCM 88) (Methanosarcina frisia).